A 128-amino-acid chain; its full sequence is uncharacterized protein (128 aa).

This is an uncharacterized protein from Haemophilus influenzae (strain ATCC 51907 / DSM 11121 / KW20 / Rd).